We begin with the raw amino-acid sequence, 1445 residues long: CD109 antigen (1445 aa).

An N-terminal signal peptide occupies residues 1–21 (MQGPPLLTAAHLLCVCTAALA). Residues Asn-68, Asn-118, Asn-247, Asn-279, Asn-365, Asn-419, Asn-513, and Asn-645 are each glycosylated (N-linked (GlcNAc...) asparagine). Positions 593 to 702 (DKSVNLMNAS…TWIWLDTNMG (110 aa)) are bait region (approximate). Residues 921-924 (CGEQ) constitute a cross-link (isoglutamyl cysteine thioester (Cys-Gln)). 2 N-linked (GlcNAc...) asparagine glycosylation sites follow: Asn-1086 and Asn-1355. The GPI-anchor amidated alanine moiety is linked to residue Ala-1420. A propeptide spans 1421–1445 (SGSHHHSSVIFIFCFKLLYFMELWL) (removed in mature form).

The protein belongs to the protease inhibitor I39 (alpha-2-macroglobulin) family. In terms of assembly, heterodimer; disulfide-linked. Interacts with TGFB1 and TGFBR1. Forms a heteromeric complex with TGFBR1, TGFBR2 and TGFBR3 in a ligand-independent manner. N-glycosylated. In terms of processing, 2 forms of 150 (p150) and 120 kDa (p120) exist due to proteolytic degradation from a 180 kDa form. In terms of tissue distribution, widely expressed with high level in uterus, aorta, heart, lung, trachea, placenta and in fetal heart, kidney, liver, spleen and lung. Expressed by CD34(+) acute myeloid leukemia cell lines, T-cell lines, activated T-lymphoblasts, endothelial cells and activated platelets. Isoform 4 is expressed in placenta. Isoform 1 is expressed in keratinocytes and placenta.

The protein localises to the cell membrane. In terms of biological role, modulates negatively TGFB1 signaling in keratinocytes. The protein is CD109 antigen (CD109) of Homo sapiens (Human).